The following is a 538-amino-acid chain: Calcium-dependent protein kinase 32 (538 aa).

The interval 1–37 (MGNCCGTAGSLAQNDNKPKKGRKKQNPFSIDYGLHHG) is disordered. Glycine 2 carries the N-myristoyl glycine lipid modification. Residues 63–321 (YTLGRELGRG…AQQVLDHPWL (259 aa)) enclose the Protein kinase domain. Residues 69–77 (LGRGEFGVT) and lysine 92 each bind ATP. Aspartate 187 serves as the catalytic Proton acceptor. Serine 227 is subject to Phosphoserine. Residues 327–357 (APNVSLGETVRARLKQFTVMNKLKKRALRVI) are autoinhibitory domain. EF-hand domains lie at 364-399 (EEASGIREGFQIMDTSQRGKINIDELKIGLQKLGHA), 400-435 (IPQDDLQILMDAGDIDRDGYLDCDEFIAISVHLRKM), 436-470 (GNDEHLKKAFAFFDQNNNGYIEIEELREALSDELG), and 471-506 (TSEEVVDAIIRDVDTDKDGRISYEEFVTMMKTGTDW). Aspartate 377, serine 379, lysine 383, glutamate 388, aspartate 413, aspartate 415, aspartate 417, tyrosine 419, glutamate 424, aspartate 449, asparagine 451, asparagine 453, tyrosine 455, glutamate 460, aspartate 484, aspartate 486, aspartate 488, and arginine 490 together coordinate Ca(2+). Residue serine 492 is modified to Phosphoserine. Residue glutamate 495 coordinates Ca(2+).

It belongs to the protein kinase superfamily. Ser/Thr protein kinase family. CDPK subfamily. In terms of assembly, interacts with ABF4. Interacts with CNGC18. As to expression, expressed in embryos and most of the vegetative tissues.

Its subcellular location is the nucleus. It is found in the membrane. It catalyses the reaction L-seryl-[protein] + ATP = O-phospho-L-seryl-[protein] + ADP + H(+). The catalysed reaction is L-threonyl-[protein] + ATP = O-phospho-L-threonyl-[protein] + ADP + H(+). Its activity is regulated as follows. Activated by calcium. Autophosphorylation may play an important role in the regulation of the kinase activity. Functionally, may play a role in signal transduction pathways that involve calcium as a second messenger. Involved in maintaining Ca2+ homeostasis in pollen tube tips by regulating CNGC18. Functions as regulator of the calcium-mediated abscisic acid (ABA) signaling pathway. Phosphorylates ABA-responsive transcription factor ABF4 in vitro. The sequence is that of Calcium-dependent protein kinase 32 from Arabidopsis thaliana (Mouse-ear cress).